We begin with the raw amino-acid sequence, 804 residues long: Elongation factor G, mitochondrial (804 aa).

The N-terminal 63 residues, 1–63, are a transit peptide targeting the mitochondrion; the sequence is MSMHRVARAV…RHFSQSPIIR (63 aa). The tr-type G domain occupies 99-385; that stretch reads RRVRNIGIAA…AVCDYLPNPA (287 aa). Residues 108–115, 183–187, and 237–240 contribute to the GTP site; these read AHIDSGKT, DTPGH, and NKMD.

The protein belongs to the TRAFAC class translation factor GTPase superfamily. Classic translation factor GTPase family. EF-G/EF-2 subfamily.

The protein resides in the mitochondrion. Its pathway is protein biosynthesis; polypeptide chain elongation. In terms of biological role, mitochondrial GTPase that catalyzes the GTP-dependent ribosomal translocation step during translation elongation. During this step, the ribosome changes from the pre-translocational (PRE) to the post-translocational (POST) state as the newly formed A-site-bound peptidyl-tRNA and P-site-bound deacylated tRNA move to the P and E sites, respectively. Catalyzes the coordinated movement of the two tRNA molecules, the mRNA and conformational changes in the ribosome. The protein is Elongation factor G, mitochondrial (mef1) of Botryotinia fuckeliana (strain B05.10) (Noble rot fungus).